We begin with the raw amino-acid sequence, 131 residues long: Agouti-signaling protein (131 aa).

The N-terminal stretch at 1–20 is a signal peptide; that stretch reads MNIFRLLLATLLVSLCFLTA. Asn-38 carries N-linked (GlcNAc...) asparagine glycosylation. A disordered region spans residues 57–104; the sequence is KSKKISRKEAEKKRSSKKKASMKNVARPRPPPPNPCVATRNSCKSPAP. Disulfide bonds link Cys-92–Cys-107, Cys-99–Cys-113, Cys-106–Cys-124, Cys-110–Cys-131, and Cys-115–Cys-122. One can recognise an Agouti domain in the interval 92-131; that stretch reads CVATRNSCKSPAPACCDPCASCQCRFFRSACTCRVLSPSC.

Its subcellular location is the secreted. Functionally, involved in the regulation of melanogenesis. The binding of ASP to MC1R precludes alpha-MSH initiated signaling and thus blocks production of cAMP, leading to a down-regulation of eumelanogenesis (brown/black pigment) and thus increasing synthesis of pheomelanin (yellow/red pigment). This Vulpes vulpes (Red fox) protein is Agouti-signaling protein (ASIP).